The chain runs to 149 residues: FAD synthase (149 aa).

ATP contacts are provided by residues 9–10 (TF), 14–17 (HPGH), Asn-92, and Tyr-119.

Belongs to the archaeal FAD synthase family. In terms of assembly, homodimer. Requires a divalent metal cation as cofactor.

It carries out the reaction FMN + ATP + H(+) = FAD + diphosphate. It functions in the pathway cofactor biosynthesis; FAD biosynthesis; FAD from FMN: step 1/1. Its function is as follows. Catalyzes the transfer of the AMP portion of ATP to flavin mononucleotide (FMN) to produce flavin adenine dinucleotide (FAD) coenzyme. This is FAD synthase from Methanoculleus marisnigri (strain ATCC 35101 / DSM 1498 / JR1).